The following is a 173-amino-acid chain: Small ribosomal subunit protein uS5 (173 aa).

The S5 DRBM domain maps to 17–80; sequence WQERVIQIRR…ADGKKQLIDV (64 aa).

It belongs to the universal ribosomal protein uS5 family. Part of the 30S ribosomal subunit. Contacts proteins S4 and S8.

With S4 and S12 plays an important role in translational accuracy. Its function is as follows. Located at the back of the 30S subunit body where it stabilizes the conformation of the head with respect to the body. In Crocosphaera subtropica (strain ATCC 51142 / BH68) (Cyanothece sp. (strain ATCC 51142)), this protein is Small ribosomal subunit protein uS5.